The sequence spans 66 residues: Gas vesicle protein A (66 aa).

Belongs to the gas vesicle GvpA family. In terms of assembly, the gas vesicle shell is 2 nm thick and consists of a single layer of this protein. It forms helical ribs nearly perpendicular to the long axis of the vesicle.

The protein resides in the gas vesicle shell. Functionally, gas vesicles are hollow, gas filled proteinaceous nanostructures found in some microorganisms. During planktonic growth they allow positioning of the organism at a favorable depth for light or nutrient acquisition. GvpA forms the protein shell. This Thiocapsa pendens (Amoebobacter pendens) protein is Gas vesicle protein A.